A 623-amino-acid chain; its full sequence is Zona pellucida sperm-binding protein 1 (623 aa).

The first 20 residues, 1-20, serve as a signal peptide directing secretion; it reads MAWGCFVVLLLLAAAPLRLG. Q21 carries the pyrrolidone carboxylic acid modification. The Extracellular portion of the chain corresponds to 21–590; the sequence is QRLHLEPGFE…GSSRNSSSRM (570 aa). N49 and N68 each carry an N-linked (GlcNAc...) asparagine glycan. Positions 182–201 are disordered; it reads IHPTPAPPSLGPGPAGSTVP. Positions 226–266 constitute a P-type domain; the sequence is ERCQVASGHIPCMVNGSSKETCQQAGCCYDSTKEEPCYYGN. Disulfide bonds link C228-C253, C237-C252, and C247-C262. N240 carries an N-linked (GlcNAc...) asparagine glycan. The ZP domain maps to 271–542; the sequence is QCFKSGYFTL…DTCSTTCDSG (272 aa). N371 carries N-linked (GlcNAc...) asparagine glycosylation. A disulfide bond links C449 and C470. A propeptide spans 547–623 (removed in mature form); that stretch reads RRSSGHHNIT…AQKLWEGIRY (77 aa). N554 and N585 each carry an N-linked (GlcNAc...) asparagine glycan. Residues 591–611 traverse the membrane as a helical segment; sequence LLLLLAITLALAAGIFVGLIW. Over 612-623 the chain is Cytoplasmic; that stretch reads AWAQKLWEGIRY.

It belongs to the ZP domain family. ZPB subfamily. Polymers of ZP2 and ZP3 organized into long filaments cross-linked by ZP1 homodimers. Interacts with ZP3. In terms of processing, proteolytically cleaved before the transmembrane segment to yield the secreted ectodomain incorporated in the zona pellucida. Post-translationally, O-glycosylated. As to expression, expressed in oocytes.

It localises to the zona pellucida. It is found in the cell membrane. In terms of biological role, component of the zona pellucida, an extracellular matrix surrounding oocytes which mediates sperm binding, induction of the acrosome reaction and prevents post-fertilization polyspermy. The zona pellucida is composed of 3 to 4 glycoproteins, ZP1, ZP2, ZP3, and ZP4. ZP1 ensures the structural integrity of the zona pellucida. This chain is Zona pellucida sperm-binding protein 1 (Zp1), found in Mus musculus (Mouse).